The sequence spans 86 residues: HssA/B-like protein 60 (86 aa).

The interval 11–33 is disordered; the sequence is GNIKSSSKSNIASSSSSSSSQSL.

Belongs to the hssA/B family.

The protein is HssA/B-like protein 60 (hssl60) of Dictyostelium discoideum (Social amoeba).